We begin with the raw amino-acid sequence, 301 residues long: Bifunctional protein FolD (301 aa).

NADP(+) is bound by residues glycine 166–serine 168, serine 191, and isoleucine 232.

Belongs to the tetrahydrofolate dehydrogenase/cyclohydrolase family. As to quaternary structure, homodimer.

The catalysed reaction is (6R)-5,10-methylene-5,6,7,8-tetrahydrofolate + NADP(+) = (6R)-5,10-methenyltetrahydrofolate + NADPH. It catalyses the reaction (6R)-5,10-methenyltetrahydrofolate + H2O = (6R)-10-formyltetrahydrofolate + H(+). Its pathway is one-carbon metabolism; tetrahydrofolate interconversion. Catalyzes the oxidation of 5,10-methylenetetrahydrofolate to 5,10-methenyltetrahydrofolate and then the hydrolysis of 5,10-methenyltetrahydrofolate to 10-formyltetrahydrofolate. This is Bifunctional protein FolD from Orientia tsutsugamushi (strain Boryong) (Rickettsia tsutsugamushi).